An 841-amino-acid polypeptide reads, in one-letter code: uncharacterized protein (841 aa).

The first 31 residues, 1–31 (MKIERYFKAIARAFIITFLFSLILQDNGVLA), serve as a signal peptide directing secretion.

Its subcellular location is the secreted. This is an uncharacterized protein from Schizosaccharomyces pombe (strain 972 / ATCC 24843) (Fission yeast).